The following is a 214-amino-acid chain: Redox-sensing transcriptional repressor Rex (214 aa).

The H-T-H motif DNA-binding region spans 16 to 55 (LYYRYLIFLNDEGKEKVSSTELAEAVQVDSASIRRDFSYF). 90–95 (GVGNMG) is a binding site for NAD(+).

It belongs to the transcriptional regulatory Rex family. As to quaternary structure, homodimer.

It is found in the cytoplasm. Functionally, modulates transcription in response to changes in cellular NADH/NAD(+) redox state. This chain is Redox-sensing transcriptional repressor Rex, found in Lactobacillus gasseri (strain ATCC 33323 / DSM 20243 / BCRC 14619 / CIP 102991 / JCM 1131 / KCTC 3163 / NCIMB 11718 / NCTC 13722 / AM63).